Here is a 1140-residue protein sequence, read N- to C-terminus: MNQEEDTVNLQIFVPELNVRKFLAVTQNDFIWDVKRKLLATLPQALPQAFNYGLFLPPCDGRAGKFLLEDRTIRDYPFTDCVPYLELKYKKRVYKMLNLDEKQLKAMHTKGQLKKFMDYVQQKNNEKVEKMCSQGLDANFHDAQGETPLTLAAGIPNNRAVIVSLIGGGAHVDFRNSEGQTAMHKAAFLSSFENVKTLIELGASPNYRDPIGLTPLYYNMLTADSNDQVAEILLREAADIGVTDMHGNHEIHQACKNGLTKHVEHLLYFGGQIDAENVNGNSPLHVCAVNNRPECARVLLFRGADHLAVNKQGQTALHVSHIVGNPGVADVVQAHNPKSSVPYRGTPQYSTRRRLSSTITRRRSMSQSSICSQDVYRTPQSVRKGPMSAAPSPSPSRSSRTTITPSEYGTMRRSGMDSMRGGGMIAAGHETNIARILVIPRGVKGFGFILRGAKHVAMPLNFEPTAQVPALQFFEGVDMSGMAVRAGLRPGDYLLEIDGIDVRRCSHDEVVEFIQQAGDTITLKVITVDVADMSRGGTIVHRPPTASSRHSLVFTPTPSAIYSSTKASSVYRMRFDTHDAHGVDYYAPNEIRNAYSESRHASVRQRPGSGRRISAAELENLMVRQRVPSVQGSPYQMQYDQESLNGGYSSKKYNSVSDMKRRKGQRNVVASSAGLNRSTFEQAAPTTSTFEYNCSSRSTPQLSRMDSFDSFDDEDEMPAPPPASYISPDLQRDSSMQRSEYSRPFRPTSRPKTPPPPPPMQHQNHQNHQYQQQHPSLPRSASTPQPIQQQQSSIPPPPPPPPPPHCEPTMVHVEFTPPSTSSVPPPPPPLPPISSGAPPPPPPPPPGGLMHVAASAPVLMSNSKGISADALKSVQLKKAEPRETSAASVSNNNNNNNNSTTDFQMDLKNALAKRRSKVAHDVDEDEERESRFEGLSLRETVRENVVERGKGIQNIGIVNKKDSGYTSSRTSLEPSESEEKDHRPHFSLDHSPNVQRVTLISQHLEDNYGQKDNMSVASSSTASSSSTVDLTKPGCFVVPSHVIPPVDYDDDPDSGTGDSDGEIRCSEISFEHKKVDVWSVDDVIGWLSSLHLSEYTPAFRSQRINGRCLRQCDRSRFTQLGVTRIAHRQIIESALRGLLQ.

6 ANK repeats span residues 144–174 (QGET…HVDF), 178–207 (EGQT…SPNY), 211–242 (IGLT…DIGV), 246–275 (HGNH…QIDA), 279–309 (NGNS…HLAV), and 312–341 (QGQT…KSSV). Positions 337–412 (PKSSVPYRGT…ITPSEYGTMR (76 aa)) are disordered. Positions 351 to 364 (TRRRLSSTITRRRS) are enriched in basic residues. The segment covering 388-412 (SAAPSPSPSRSSRTTITPSEYGTMR) has biased composition (low complexity). A PDZ domain is found at 436 to 529 (ILVIPRGVKG…TITLKVITVD (94 aa)). 2 stretches are compositionally biased toward polar residues: residues 640–657 (DQES…NSVS) and 687–704 (TSTF…QLSR). Disordered stretches follow at residues 640-673 (DQES…ASSA), 687-856 (TSTF…AASA), 875-902 (QLKK…STTD), 961-993 (KDSG…HSPN), and 1008-1028 (YGQK…SSTV). Composition is skewed to low complexity over residues 761 to 775 (QHQN…QQHP) and 784 to 793 (PQPIQQQQSS). Pro residues-rich tracts occupy residues 794 to 806 (IPPP…PPHC) and 823 to 847 (VPPP…PPPG). Polar residues predominate over residues 964 to 974 (GYTSSRTSLEP). Basic and acidic residues predominate over residues 977–988 (SEEKDHRPHFSL). The span at 1015 to 1028 (SVASSSTASSSSTV) shows a compositional bias: low complexity. Positions 1078 to 1140 (WSVDDVIGWL…IESALRGLLQ (63 aa)) constitute an SAM domain.

It belongs to the SHANK family. As to quaternary structure, interacts (via PDZ domain) with egl-19 (via C-terminus). As to expression, expressed in the pharynx, pharyngeal-intestinal valve, intestine, rectal epithelial cells, tail neurons, nerve cord and sperm.

Its subcellular location is the cell projection. It localises to the pseudopodium. It is found in the cytoplasmic vesicle. The protein localises to the postsynaptic density. Scaffold protein that most likely acts in the postsynaptic density (PSD) of excitatory synapses which orchestrates synapse formation and maintenance at neuromuscular junctions. Associates with and trafficks the L-type calcium channel egl-19 to the cell surface of body wall muscles to ensure the function of the calcium channel and therefore maintain the Ca(2+) current density. The maintenance of Ca(2+) also allows for the downstream regulation of Ca(2+)-induced expression of genes such as gem-4. Plays a role in the regulation of the defecation cycle, and this may be in association with the inositol trisphosphate (IP3) receptor itr-1, which in turn mediates periodic calcium release and muscle contractions. Required for normal fertility and pharyngeal pumping. The chain is Protein shank from Caenorhabditis elegans.